The sequence spans 823 residues: NAD-dependent histone deacetylase sirtuin-1 (823 aa).

The span at 41 to 67 (LASTSTEAEAEAEATATTTEPATSELA) shows a compositional bias: low complexity. The disordered stretch occupies residues 41 to 146 (LASTSTEAEA…SSSNCSSSVE (106 aa)). Over residues 72–95 (GEIKTKTLAAREEQEIGANLEHKT) the composition is skewed to basic and acidic residues. A compositionally biased stretch (acidic residues) spans 104–137 (EDEDDEEEEEEDDEEEEEDDEEGITGTSNEDEDS). Positions 204–499 (KLASVNTFDD…LCCDESVLTE (296 aa)) constitute a Deacetylase sirtuin-type domain. Residues 229–248 (GAGV…NGIY) and 313–316 (QNID) contribute to the NAD(+) site. His331 serves as the catalytic Proton acceptor. 4 residues coordinate Zn(2+): Cys339, Cys342, Cys363, and Cys366. NAD(+)-binding positions include 427 to 429 (GSS), 452 to 454 (NRE), and Ser469. 2 positions are modified to phosphoserine: Ser618 and Ser621. Residues 698-707 (DYSDDDDEEE) show a composition bias toward acidic residues. Disordered stretches follow at residues 698–722 (DYSD…GNVG) and 777–823 (IIEQ…LAAV). Basic and acidic residues predominate over residues 798 to 813 (PSEENKQQTQIERSEE). Positions 814-823 (SPPPGQLAAV) are enriched in pro residues.

It belongs to the sirtuin family. Class I subfamily. In terms of assembly, interacts with the transcriptional repressors hairy (hry) and deadpan (dpn); via basic domains. Associates with the Esc/E(z) histone methyltransferase complex. Interacts directly with E(z) and HDAC1/Rpd3. Zn(2+) serves as cofactor.

The protein resides in the cytoplasm. It localises to the nucleus. The protein localises to the chromosome. The catalysed reaction is N(6)-acetyl-L-lysyl-[protein] + NAD(+) + H2O = 2''-O-acetyl-ADP-D-ribose + nicotinamide + L-lysyl-[protein]. Functionally, NAD-dependent histone deacetylase involved in heterochromatic silencing. Mildly suppresses the heterochromatin-mediated silencing phenomenon known as position-effect variegation (PEV). Required for epigenetic silencing of the polycomb group proteins. Has histone H4 deacetylase activity in vitro. Required maternally for establishing proper segmentation of the embryo. Involved in sex determination. May be involved in the regulation of life span. The sequence is that of NAD-dependent histone deacetylase sirtuin-1 from Drosophila melanogaster (Fruit fly).